The following is a 366-amino-acid chain: Tyrosyl-DNA phosphodiesterase 2 (366 aa).

M1 carries the post-translational modification N-acetylmethionine. Residues 1–22 (MASGSSSDAAESAEPAAAPAAA) show a composition bias toward low complexity. Positions 1–30 (MASGSSSDAAESAEPAAAPAAAETEEDQVK) are disordered. A Glycyl lysine isopeptide (Lys-Gly) (interchain with G-Cter in SUMO2) cross-link involves residue K30. T95 bears the Phosphothreonine; by ACVR1B mark. Positions 126–130 (NIDGL) are interaction with 5' end of substrate DNA. Residues D128 and E158 each coordinate Mg(2+). The interval 232–237 (HLESTR) is interaction with 5' end of substrate DNA. Catalysis depends on D268, which acts as the Proton donor/acceptor. The tract at residues 270–272 (NLR) is interaction with 5' end of substrate DNA.

It belongs to the CCR4/nocturin family. In terms of assembly, interacts with TRAF2, TRAF3, TRAF5, TRAF6, TNFRSF8/CD30, TNFRSF5/CD40, TNFRSF1B/TNF-R75, ETS1, ETS2, FLI1, SMAD3 and ACVR1B/ALK4. Requires Mg(2+) as cofactor. Mn(2+) serves as cofactor. Post-translationally, ubiquitinated by TRAF6.

It is found in the nucleus. It localises to the PML body. The protein localises to the nucleolus. The protein resides in the cytoplasm. Functionally, DNA repair enzyme that can remove a variety of covalent adducts from DNA through hydrolysis of a 5'-phosphodiester bond, giving rise to DNA with a free 5' phosphate. Catalyzes the hydrolysis of dead-end complexes between DNA and the topoisomerase 2 (TOP2) active site tyrosine residue. The 5'-tyrosyl DNA phosphodiesterase activity can enable the repair of TOP2-induced DNA double-strand breaks/DSBs without the need for nuclease activity, creating a 'clean' DSB with 5'-phosphate termini that are ready for ligation. Thereby, protects the transcription of many genes involved in neurological development and maintenance from the abortive activity of TOP2. Hydrolyzes 5'-phosphoglycolates on protruding 5' ends on DSBs due to DNA damage by radiation and free radicals. Has preference for single-stranded DNA or duplex DNA with a 4 base pair overhang as substrate. Also has 3'-tyrosyl DNA phosphodiesterase activity, but less efficiently and much slower than TDP1. Constitutes the major if not only 5'-tyrosyl-DNA phosphodiesterase in cells. Also acts as an adapter by participating in the specific activation of MAP3K7/TAK1 in response to TGF-beta: associates with components of the TGF-beta receptor-TRAF6-TAK1 signaling module and promotes their ubiquitination dependent complex formation. Involved in non-canonical TGF-beta induced signaling routes. May also act as a negative regulator of ETS1 and may inhibit NF-kappa-B activation. Acts as a regulator of ribosome biogenesis following stress. The polypeptide is Tyrosyl-DNA phosphodiesterase 2 (Tdp2) (Rattus norvegicus (Rat)).